We begin with the raw amino-acid sequence, 163 residues long: uncharacterized protein (163 aa).

Positions Leu-101–Glu-162 form a coiled coil.

This is an uncharacterized protein from Aquifex aeolicus (strain VF5).